The following is a 308-amino-acid chain: Nuclear transcription factor Y subunit A-5 (308 aa).

Over residues 1–10 (MQVFQRKEDS) the composition is skewed to basic and acidic residues. Disordered stretches follow at residues 1-26 (MQVF…IQGS) and 49-71 (GLQL…GGGE). Positions 11 to 26 (SWGNSMPTTNSNIQGS) are enriched in polar residues. A Subunit association domain (SAD) motif is present at residues 181-204 (FVNAKQYHAILRRRKHRAKLEAQN). Residues 211 to 236 (KPYLHESRHLHALKRARGSGGRFLNT) constitute a DNA-binding region (NFYA/HAP2-type). Residues 251 to 273 (MANGQNFSMSPHGGGSGIGSSSI) are disordered.

This sequence belongs to the NFYA/HAP2 subunit family. In terms of assembly, heterotrimeric transcription factor composed of three components, NF-YA, NF-YB and NF-YC. NF-YB and NF-YC must interact and dimerize for NF-YA association and DNA binding. Expressed in the whole plant, except roots. Present in etiolated seedlings.

It is found in the nucleus. Stimulates the transcription of various genes by recognizing and binding to a CCAAT motif in promoters. Involved in the blue light (BL) and abscisic acid (ABA) signaling pathways. This Arabidopsis thaliana (Mouse-ear cress) protein is Nuclear transcription factor Y subunit A-5 (NFYA5).